A 398-amino-acid polypeptide reads, in one-letter code: uncharacterized protein (398 aa).

Transmembrane regions (helical) follow at residues 37 to 57, 92 to 112, 122 to 142, 186 to 206, 228 to 248, and 268 to 288; these read LVILTIVAFFWGLLGVIFVQF, IFNAIFWLTQILFNVPFFIFG, LLTLYFVAVSNLFGFFFSYIP, LFYGLIWGFLQAVFYSVILII, IGGILMLINTVSFIIGYVIGT, and FGVAFFLSPNLVFTLLMNIVL.

The protein resides in the cell membrane. This is an uncharacterized protein from Mycoplasma genitalium (strain ATCC 33530 / DSM 19775 / NCTC 10195 / G37) (Mycoplasmoides genitalium).